Consider the following 594-residue polypeptide: Glutamate decarboxylase 1 (594 aa).

Residues 1-13 show a composition bias toward low complexity; that stretch reads MASSTPSSSATSS. Positions 1 to 23 are disordered; the sequence is MASSTPSSSATSSNAGADPNTTN. Phosphoserine is present on S78. 190–192 is a 4-aminobutanoate binding site; it reads QLS. At K405 the chain carries N6-(pyridoxal phosphate)lysine. R567 is a binding site for 4-aminobutanoate.

It belongs to the group II decarboxylase family. Homodimer. Pyridoxal 5'-phosphate is required as a cofactor.

It carries out the reaction L-glutamate + H(+) = 4-aminobutanoate + CO2. Functionally, catalyzes the synthesis of the inhibitory neurotransmitter gamma-aminobutyric acid (GABA) with pyridoxal 5'-phosphate as cofactor. The polypeptide is Glutamate decarboxylase 1 (GAD1) (Felis catus (Cat)).